The primary structure comprises 214 residues: Serine protease inhibitor 2.1 (214 aa).

Belongs to the serpin family.

The protein is Serine protease inhibitor 2.1 of Rattus norvegicus (Rat).